The primary structure comprises 172 residues: Large ribosomal subunit protein uL10 (172 aa).

Belongs to the universal ribosomal protein uL10 family. As to quaternary structure, part of the ribosomal stalk of the 50S ribosomal subunit. The N-terminus interacts with L11 and the large rRNA to form the base of the stalk. The C-terminus forms an elongated spine to which L12 dimers bind in a sequential fashion forming a multimeric L10(L12)X complex.

Its function is as follows. Forms part of the ribosomal stalk, playing a central role in the interaction of the ribosome with GTP-bound translation factors. This chain is Large ribosomal subunit protein uL10, found in Francisella tularensis subsp. tularensis (strain FSC 198).